We begin with the raw amino-acid sequence, 508 residues long: MCKMEKFLYHRKLWEMNVKLLGESKVEKLKNSFVSRPRMSLWMIRAVTVLLLWSCFVHLMALGEMWGPRLFKGWPSCFNHHQLSTAAEMTSLPTKIALPPKRVYVNNGYLMVSCNGGLNQMRAAICDMVTVARYMNVTLIVPELDKTSFWNDPSEFKDIFDVDHFISSLRDEVRILKELPPRLKKRVELGVYHEMPPISWSNMSYYQNQILPLVKKHKVLHLNRTDTRLANNGLPVEVQKLRCRVNFNGLKFTPQIEELGRRVVKILREKGPFLVLHLRYEMDMLAFSGCSHGCNPEEEEELTRMRYAYPWWKEKVINSELKRKDGLCPLTPEETALTLTALGIDRNVQIYIAAGEIYGGQRRMKALTDAFPNVVRKETLLESSDLDFCRNHSSQMAALDYLVALESDIFVPTNDGNMARVVEGHRRFLGFKKTIQLNRRFLVKLIDEYTEGLLSWDVFSSTVKAFHSTRMGSPKRRLVIPNRPKEEDYFYANPQECLQLLDEPLRVI.

A helical; Signal-anchor for type II membrane protein membrane pass occupies residues 41 to 63 (LWMIRAVTVLLLWSCFVHLMALG). N-linked (GlcNAc...) asparagine glycans are attached at residues Asn-136, Asn-202, and Asn-223. Residue 277–279 (HLR) participates in substrate binding. Asn-391 carries an N-linked (GlcNAc...) asparagine glycan.

It belongs to the glycosyltransferase GT106 family. As to expression, highly expressed in siliques. Expressed in stems and flowers. Expressed at low levels in roots and rosette leaves.

It is found in the golgi apparatus membrane. It catalyses the reaction alpha-D-galacturonosyl-[(1-&gt;2)-alpha-L-rhamnosyl-(1-&gt;4)-alpha-D-galacturonosyl](n) + UDP-beta-L-rhamnose = [(1-&gt;2)-alpha-L-rhamnosyl-(1-&gt;4)-alpha-D-galacturonosyl](n+1) + UDP + H(+). It functions in the pathway glycan metabolism; pectin biosynthesis. Functionally, glycosyltransferase involved in the formation of rhamnogalacturonan I (RG-I) oligosaccharides in the seed coat mucilage, which is a specialized cell wall with abundant RG-I. Transfers the rhamnose residue from UDP-beta-L-rhamnose to RG-I oligosaccharides. Prefers RG-I oligosaccharides with a degree of polymerization of 5 or larger than 5. Does not act on oligosaccharides with a degree of polymerization of 4 or smaller than 4. Does not require metal ions for its activity. The sequence is that of Rhamnogalacturonan I rhamnosyltransferase 1 from Arabidopsis thaliana (Mouse-ear cress).